A 159-amino-acid chain; its full sequence is Cytochrome c-type biogenesis CcmH-like mitochondrial protein (159 aa).

The Mitochondrial intermembrane segment spans residues 1 to 82; that stretch reads MEKTDEERKK…ETVLYAPKFD (82 aa). Heme is bound by residues Cys27 and Cys30. Residues 83–105 traverse the membrane as a helical segment; the sequence is LQTAALWLTPVIIAGGTAAGIVY. Over 106–159 the chain is Mitochondrial matrix; that stretch reads QKHRLRKNVDIMALNLIRGVPLTPKERVTILDVLIPPSPPPQGVVSRLRRWLNR.

The protein belongs to the CcmH/CycL/Ccl2/NrfF family. In terms of assembly, interacts (via N-terminus) with CYTC-1. Interacts with CCMFN1 and CCMFN2.

The protein resides in the mitochondrion inner membrane. Functionally, plays a central role in mitochondrial cytochrome c maturation. Probable component of a heme lyase complex involved in the reduction of apocytochrome c. Forms a complex with CCMF proteins (CCMFC, CCMFN1 and CCMFN2) that performs the assembly of heme with c-type apocytochromes in mitochondria. The chain is Cytochrome c-type biogenesis CcmH-like mitochondrial protein from Arabidopsis thaliana (Mouse-ear cress).